Consider the following 86-residue polypeptide: Small ribosomal subunit protein bS16 (86 aa).

The protein belongs to the bacterial ribosomal protein bS16 family.

The chain is Small ribosomal subunit protein bS16 from Stenotrophomonas maltophilia (strain K279a).